The primary structure comprises 578 residues: Probable lysosomal cobalamin transporter (578 aa).

2 helical membrane passes run 8–28 (LIWV…SVFI) and 46–66 (IFAI…VALV). Residue Asn-70 is glycosylated (N-linked (GlcNAc...) asparagine). A run of 2 helical transmembrane segments spans residues 95–115 (VVYY…IPFT) and 145–165 (TITF…VPVA). N-linked (GlcNAc...) asparagine glycosylation occurs at Asn-168. Transmembrane regions (helical) follow at residues 188–208 (ALTF…VLYT), 312–332 (LLGG…MLLT), 347–367 (GYIL…VQAA), 375–395 (VIFT…IAIV), 419–439 (LTTA…SMVV), and 506–526 (FFGV…LIVV). The tract at residues 539-578 (RQMDEDAEEAEEEGLLASTGRRLDTAWQDITGRSNRQRDS) is disordered. A compositionally biased stretch (acidic residues) spans 540–552 (QMDEDAEEAEEEG).

It belongs to the LIMR family. LMBRD1 subfamily.

It localises to the lysosome membrane. Its function is as follows. Probable lysosomal cobalamin transporter. Required to export cobalamin from lysosomes allowing its conversion to cofactors. This Aspergillus terreus (strain NIH 2624 / FGSC A1156) protein is Probable lysosomal cobalamin transporter.